A 165-amino-acid polypeptide reads, in one-letter code: Type IV major pilin protein PilE1 (165 aa).

Positions 1–7 (MNTLQKG) are cleaved as a propeptide — leader sequence. N-methylphenylalanine is present on Phe8. Residues 8-28 (FTLIELMIVIAIVGILAAVAL) form a helical membrane-spanning segment. An O-linked (DADDGlc) serine glycan is attached at Ser70. Ser75 carries the post-translational modification O-(2-aminoethylphosphoryl)serine; alternate. Residue Ser75 is modified to O-(2-cholinephosphoryl)serine; alternate. A Phosphoserine; alternate modification is found at Ser75. The residue at position 101 (Ser101) is an O-(sn-1-glycerophosphoryl)serine; partial. The cysteines at positions 128 and 158 are disulfide-linked. Residues 137-153 (DDTVADAKDGKEIDTKH) are compositionally biased toward basic and acidic residues. Residues 137 to 165 (DDTVADAKDGKEIDTKHLPSTCRDNFDAK) are disordered.

Belongs to the N-Me-Phe pilin family. The pili are polar flexible filaments of about 5.4 nanometers diameter and 2.5 micrometers average length; they consist of only a single polypeptide chain arranged in a helical configuration of five subunits per turn in the assembled pilus. Post-translationally, the O-linked glycan identified as Gal-GlcNAc disaccharide in PubMed:7477282 and PubMed:10048019 is now identified as either a hexosyl-diacetamidotrideoxyhexoside (DATDHex) by mass spectrometry in PubMed:15249686, or alpha-D-galactopyranosyl-(1-&gt;3)-2,4-diacetamido-2,4-dideoxy-beta-D-glucopyranoside (DADDGlc) by X-ray diffraction in PubMed:16949362. It is not clear whether there is a chemical difference in the glycosylation of the two derivatives of strain MS11 used in these experiments, or not. In terms of processing, in some MS11 derivative strains, Ser-75 is modified to O-(2-aminoethylphosphoryl)serine, and in some other derivatives that can be secondarily modified to O-(2-cholinephosphoryl)serine by N-methylation.

The protein resides in the fimbrium. The protein localises to the membrane. Major component of the type IV pilus (T4P) that plays a role in cellular adherence, microcolony formation, resistance to neutrophil mediated killing, twitching motility as well as transformation. Mediates the attachment and the formation of bacterial microcolonies on host epithelial cells. Mechanistically, pili retractation induces host NF-kappa-B activation in infected cells, which is temporally associated with the formation of gonococcal microcolonies. In Neisseria gonorrhoeae, this protein is Type IV major pilin protein PilE1 (pilE1).